The following is a 362-amino-acid chain: Mannan endo-1,4-beta-mannosidase (362 aa).

The signal sequence occupies residues 1-26 (MFKKHTISLLIIFLLASAVLAKPIEA). A GH26 domain is found at 38 to 349 (QTTKTVMNWL…YHDSWTLNKG (312 aa)). His-131 is a substrate binding site. Glu-193 (proton donor) is an active-site residue. Positions 198 and 268 each coordinate substrate. Glu-292 functions as the Nucleophile in the catalytic mechanism. 324–325 (WN) contacts substrate.

The protein belongs to the glycosyl hydrolase 26 family. As to quaternary structure, homodimer.

It is found in the secreted. The catalysed reaction is Random hydrolysis of (1-&gt;4)-beta-D-mannosidic linkages in mannans, galactomannans and glucomannans.. Its function is as follows. Involved in the degradation of glucomannan. Catalyzes the endo hydrolysis of beta-1,4-linked mannan, galactomannan and glucomannan. The protein is Mannan endo-1,4-beta-mannosidase of Bacillus subtilis (strain 168).